A 180-amino-acid chain; its full sequence is ATP-dependent protease subunit HslV (180 aa).

Residue T8 is part of the active site. Na(+) is bound by residues A165, C168, and T171.

It belongs to the peptidase T1B family. HslV subfamily. A double ring-shaped homohexamer of HslV is capped on each side by a ring-shaped HslU homohexamer. The assembly of the HslU/HslV complex is dependent on binding of ATP.

The protein resides in the cytoplasm. The enzyme catalyses ATP-dependent cleavage of peptide bonds with broad specificity.. Its activity is regulated as follows. Allosterically activated by HslU binding. Functionally, protease subunit of a proteasome-like degradation complex believed to be a general protein degrading machinery. The sequence is that of ATP-dependent protease subunit HslV from Staphylococcus epidermidis (strain ATCC 12228 / FDA PCI 1200).